Here is a 269-residue protein sequence, read N- to C-terminus: Protein tsct-1 (269 aa).

It belongs to the TSC-22/Dip/Bun family.

This chain is Protein tsct-1, found in Caenorhabditis elegans.